Reading from the N-terminus, the 527-residue chain is Heat shock factor protein HSF8 (527 aa).

The DNA-binding element occupies Pro-39–His-133. Disordered stretches follow at residues Arg-128–Ser-158, Asn-241–Gln-273, and Ser-297–Lys-341. A compositionally biased stretch (low complexity) spans Gly-134–Pro-152. Positions Ser-317–Arg-326 are enriched in polar residues.

It belongs to the HSF family. As to quaternary structure, homotrimer. In terms of processing, exhibits temperature-dependent phosphorylation.

It is found in the nucleus. Its function is as follows. DNA-binding protein that specifically binds heat shock promoter elements (HSE) and activates transcription. The protein is Heat shock factor protein HSF8 (HSF8) of Solanum lycopersicum (Tomato).